Reading from the N-terminus, the 139-residue chain is uncharacterized protein (139 aa).

Helical transmembrane passes span 19–39 (CIIF…FILG), 64–84 (IFNV…FNLF), and 89–109 (AITI…WILG).

Its subcellular location is the cell membrane. This is an uncharacterized protein from Methanocaldococcus jannaschii (strain ATCC 43067 / DSM 2661 / JAL-1 / JCM 10045 / NBRC 100440) (Methanococcus jannaschii).